A 560-amino-acid chain; its full sequence is DNA ligase B (560 aa).

The active-site N6-AMP-lysine intermediate is the Lys-124.

This sequence belongs to the NAD-dependent DNA ligase family. LigB subfamily.

It carries out the reaction NAD(+) + (deoxyribonucleotide)n-3'-hydroxyl + 5'-phospho-(deoxyribonucleotide)m = (deoxyribonucleotide)n+m + AMP + beta-nicotinamide D-nucleotide.. Its function is as follows. Catalyzes the formation of phosphodiester linkages between 5'-phosphoryl and 3'-hydroxyl groups in double-stranded DNA using NAD as a coenzyme and as the energy source for the reaction. This chain is DNA ligase B, found in Escherichia coli (strain ATCC 8739 / DSM 1576 / NBRC 3972 / NCIMB 8545 / WDCM 00012 / Crooks).